Reading from the N-terminus, the 346-residue chain is DNA-directed RNA polymerase subunit alpha (346 aa).

The tract at residues 1–243 (MTMNNPNLTM…EQLSIWVNFE (243 aa)) is alpha N-terminal domain (alpha-NTD). The interval 260–346 (LNENLFRSVE…ERWKAQQAQA (87 aa)) is alpha C-terminal domain (alpha-CTD).

This sequence belongs to the RNA polymerase alpha chain family. Homodimer. The RNAP catalytic core consists of 2 alpha, 1 beta, 1 beta' and 1 omega subunit. When a sigma factor is associated with the core the holoenzyme is formed, which can initiate transcription.

The enzyme catalyses RNA(n) + a ribonucleoside 5'-triphosphate = RNA(n+1) + diphosphate. In terms of biological role, DNA-dependent RNA polymerase catalyzes the transcription of DNA into RNA using the four ribonucleoside triphosphates as substrates. This chain is DNA-directed RNA polymerase subunit alpha, found in Sorangium cellulosum (strain So ce56) (Polyangium cellulosum (strain So ce56)).